A 96-amino-acid polypeptide reads, in one-letter code: Cystatin (96 aa).

Positions 22-65 (DFIKAALNETGTHAGRKYKVLRSSQQVVAGMKYTFYIVFEDDES) constitute a Cystatin domain. The N-linked (GlcNAc...) asparagine glycan is linked to asparagine 29.

This sequence belongs to the cystatin family. As to quaternary structure, interacts with cathepsin L-like peptidase; the interaction results in inhibition of cathepsin L-like peptidase activity. As to expression, salivary gland. Midgut.

In terms of biological role, cysteine proteinase inhibitor. Inhibits cathepsin L-like peptidase. Increases cell viability following apoptosis induction by staurosporine. Inhibits human cathepsin S (CTSS), human cathepsin L2 (CTSV), human cathepsin L (CTSL), human cathepsin B (CTSB) and papain. (Microbial infection) Modulates dengue virus type 2 replication in salivary glands. The protein is Cystatin of Aedes aegypti (Yellowfever mosquito).